The following is a 362-amino-acid chain: 3-dehydroquinate synthase (362 aa).

Residues 71 to 76 (DGEQYK), 105 to 109 (GVVGD), 129 to 130 (TT), K142, K151, and 169 to 172 (CLKT) each bind NAD(+). E184, H247, and H264 together coordinate Zn(2+).

This sequence belongs to the sugar phosphate cyclases superfamily. Dehydroquinate synthase family. The cofactor is NAD(+). Co(2+) is required as a cofactor. Requires Zn(2+) as cofactor.

It is found in the cytoplasm. It carries out the reaction 7-phospho-2-dehydro-3-deoxy-D-arabino-heptonate = 3-dehydroquinate + phosphate. It participates in metabolic intermediate biosynthesis; chorismate biosynthesis; chorismate from D-erythrose 4-phosphate and phosphoenolpyruvate: step 2/7. In terms of biological role, catalyzes the conversion of 3-deoxy-D-arabino-heptulosonate 7-phosphate (DAHP) to dehydroquinate (DHQ). The polypeptide is 3-dehydroquinate synthase (Shigella flexneri).